The following is a 621-amino-acid chain: DNA mismatch repair protein MutL (621 aa).

The protein belongs to the DNA mismatch repair MutL/HexB family.

Its function is as follows. This protein is involved in the repair of mismatches in DNA. It is required for dam-dependent methyl-directed DNA mismatch repair. May act as a 'molecular matchmaker', a protein that promotes the formation of a stable complex between two or more DNA-binding proteins in an ATP-dependent manner without itself being part of a final effector complex. This chain is DNA mismatch repair protein MutL, found in Xylella fastidiosa (strain M12).